Reading from the N-terminus, the 110-residue chain is ATP-dependent Clp protease adapter protein ClpS (110 aa).

This sequence belongs to the ClpS family. As to quaternary structure, binds to the N-terminal domain of the chaperone ClpA.

Involved in the modulation of the specificity of the ClpAP-mediated ATP-dependent protein degradation. The protein is ATP-dependent Clp protease adapter protein ClpS of Bartonella quintana (strain Toulouse) (Rochalimaea quintana).